The primary structure comprises 339 residues: Holliday junction branch migration complex subunit RuvB (339 aa).

The tract at residues 1-22 (MIDADPTLRPEPLPEDNDRALR) is disordered. Residues 1–182 (MIDADPTLRP…FGIPTRLQFY (182 aa)) are large ATPase domain (RuvB-L). ATP is bound by residues L21, R22, G63, K66, T67, T68, 129–131 (EDF), R172, Y182, and R219. Position 67 (T67) interacts with Mg(2+). Positions 183–253 (TIDELFEIVS…LADGALTRLG (71 aa)) are small ATPAse domain (RuvB-S). The tract at residues 256–339 (QLGLDGADRR…PPKSQSDLFG (84 aa)) is head domain (RuvB-H). Positions 292, 311, and 316 each coordinate DNA.

This sequence belongs to the RuvB family. In terms of assembly, homohexamer. Forms an RuvA(8)-RuvB(12)-Holliday junction (HJ) complex. HJ DNA is sandwiched between 2 RuvA tetramers; dsDNA enters through RuvA and exits via RuvB. An RuvB hexamer assembles on each DNA strand where it exits the tetramer. Each RuvB hexamer is contacted by two RuvA subunits (via domain III) on 2 adjacent RuvB subunits; this complex drives branch migration. In the full resolvosome a probable DNA-RuvA(4)-RuvB(12)-RuvC(2) complex forms which resolves the HJ.

Its subcellular location is the cytoplasm. The catalysed reaction is ATP + H2O = ADP + phosphate + H(+). Its function is as follows. The RuvA-RuvB-RuvC complex processes Holliday junction (HJ) DNA during genetic recombination and DNA repair, while the RuvA-RuvB complex plays an important role in the rescue of blocked DNA replication forks via replication fork reversal (RFR). RuvA specifically binds to HJ cruciform DNA, conferring on it an open structure. The RuvB hexamer acts as an ATP-dependent pump, pulling dsDNA into and through the RuvAB complex. RuvB forms 2 homohexamers on either side of HJ DNA bound by 1 or 2 RuvA tetramers; 4 subunits per hexamer contact DNA at a time. Coordinated motions by a converter formed by DNA-disengaged RuvB subunits stimulates ATP hydrolysis and nucleotide exchange. Immobilization of the converter enables RuvB to convert the ATP-contained energy into a lever motion, pulling 2 nucleotides of DNA out of the RuvA tetramer per ATP hydrolyzed, thus driving DNA branch migration. The RuvB motors rotate together with the DNA substrate, which together with the progressing nucleotide cycle form the mechanistic basis for DNA recombination by continuous HJ branch migration. Branch migration allows RuvC to scan DNA until it finds its consensus sequence, where it cleaves and resolves cruciform DNA. The sequence is that of Holliday junction branch migration complex subunit RuvB from Ruegeria sp. (strain TM1040) (Silicibacter sp.).